A 3011-amino-acid chain; its full sequence is Genome polyprotein (3011 aa).

Ser-2 is modified (N-acetylserine; by host). Positions 2-23 (STNPKPQRKTKRNTNRRPQNVK) are interaction with STAT1. The tract at residues 2 to 58 (STNPKPQRKTKRNTNRRPQNVKFPGGGQIVGGVCLLPRRGPRVGVRATRKTSERSQP) is interaction with EIF2AK2/PKR. Residues 2–59 (STNPKPQRKTKRNTNRRPQNVKFPGGGQIVGGVCLLPRRGPRVGVRATRKTSERSQPR) form an interaction with DDX3X region. The disordered stretch occupies residues 2-75 (STNPKPQRKT…PKARRPEGRS (74 aa)). Over 2-168 (STNPKPQRKT…EDGVNYATGN (167 aa)) the chain is Cytoplasmic. 2 short sequence motifs (nuclear localization signal) span residues 5 to 13 (PKPQRKTKR) and 38 to 43 (PRRGPR). Residues 7 to 16 (PQRKTKRNTN) show a composition bias toward basic residues. Ser-53 carries the post-translational modification Phosphoserine; by host. Short sequence motifs (nuclear localization signal) lie at residues 58–64 (PRGRRQP) and 66–71 (PKARRP). The span at 58–68 (PRGRRQPIPKA) shows a compositional bias: basic residues. Ser-99 carries the post-translational modification Phosphoserine; by host. The important for endoplasmic reticulum and mitochondrial localization stretch occupies residues 112-152 (PRRRSRNLGKVIDTLTCGFADLMGYIPLVGAPLGGAARALA). A Phosphoserine; by host PKA modification is found at Ser-116. Residues 122-173 (VIDTLTCGFADLMGYIPLVGAPLGGAARALAHGVRVLEDGVNYATGNLPGCS) are interaction with APOA2. An important for lipid droplets localization region spans residues 164–167 (YATG). A helical transmembrane segment spans residues 169–189 (LPGCSFSIFLLALLSCLTVPA). Residues 178 to 191 (LLALLSCLTVPASA) constitute a propeptide, ER anchor for the core protein, removed in mature form by host signal peptidase. Residues 190-358 (SAVEVRNSSG…AGAHWGVLAG (169 aa)) lie on the Lumenal side of the membrane. Residues Asn-196, Asn-209, and Asn-234 are each glycosylated (N-linked (GlcNAc...) asparagine; by host). The important for fusion stretch occupies residues 265 to 296 (IVGAAAFCSAMYVGDLCGSIFLVGQLFTLSPR). Asn-305 is a glycosylation site (N-linked (GlcNAc...) asparagine; by host). Residues 359 to 379 (PAYYSMVGNWAKVLVVLLLFA) traverse the membrane as a helical segment. Topologically, residues 380 to 725 (GVDATTQVTG…WEYVVLLFLL (346 aa)) are lumenal. The interval 385 to 411 (TQVTGGTAGRNAYRLASLFSTGPSQNI) is HVR1. N-linked (GlcNAc...) (high mannose) asparagine; by host glycosylation is found at Asn-417, Asn-423, Asn-430, and Asn-448. Cystine bridges form between Cys-429–Cys-552, Cys-486–Cys-494, and Cys-503–Cys-508. An HVR2 region spans residues 474–479 (YGGKAS). The interval 480–493 (NDQRPYCWHYAPRP) is CD81-binding 1. An N-linked (GlcNAc...) (high mannose) asparagine; by host glycan is attached at Asn-532. A glycan (N-linked (GlcNAc...) asparagine; by host) is linked at Asn-540. The segment at 544–551 (PPIGNWFG) is CD81-binding 2. N-linked (GlcNAc...) (high mannose) asparagine; by host glycosylation occurs at Asn-556. Intrachain disulfides connect Cys-564–Cys-569, Cys-581–Cys-585, Cys-597–Cys-620, and Cys-607–Cys-644. Residues Asn-623 and Asn-645 are each glycosylated (N-linked (GlcNAc...) (high mannose) asparagine; by host). A disulfide bridge links Cys-652 with Cys-677. A PKR/eIF2-alpha phosphorylation homology domain (PePHD) region spans residues 660–671 (AELSPLLLSTTQ). Residues 726-746 (LADARICACLWMMLLISQVEA) traverse the membrane as a helical segment. At 747-757 (ALENLIVLNAA) the chain is on the lumenal side. A helical transmembrane segment spans residues 758–778 (SLAGTHGIVPFFIFFCAAWYL). Residues 779–781 (KGK) are Cytoplasmic-facing. A helical transmembrane segment spans residues 782–803 (WAPGLVYSVYGMWPLLLLLLAL). At 804–813 (PQRAYALDQE) the chain is on the lumenal side. The chain crosses the membrane as a helical span at residues 814–834 (LAASCGAVVFISLAVLTLSPY). The Cytoplasmic segment spans residues 835–838 (YKQY). A helical membrane pass occupies residues 839 to 859 (MARGIWWLQYMLTRAEALLHV). Residues 860-881 (WVPSLNARGGRDGAILLMCVLH) lie on the Lumenal side of the membrane. Residues 882–902 (PHLLFDITKIMLAILGPLWIL) traverse the membrane as a helical segment. The 124-residue stretch at 903–1026 (QASLLRVPYF…ALTDKGWRLL (124 aa)) folds into the Peptidase C18 domain. Residues 903–1657 (QASLLRVPYF…CMSADLEVVT (755 aa)) lie on the Cytoplasmic side of the membrane. The segment at 904–1206 (ASLLRVPYFV…PVESLETTMR (303 aa)) is protease NS2-3. Cys-922 carries S-palmitoyl cysteine; by host lipidation. The segment at 929–949 (AGGHYVQMALLKLGALTGTYI) is interaction with host SCPS1. Residues His-952, Glu-972, and Cys-993 each act as for protease NS2 activity; shared with dimeric partner in the active site. Positions 1027-1208 (APITAYAQQT…ESLETTMRSP (182 aa)) constitute a Peptidase S29 domain. Active-site charge relay system; for serine protease NS3 activity residues include His-1083 and Asp-1107. Positions 1123 and 1125 each coordinate Zn(2+). The active-site Charge relay system; for serine protease NS3 activity is Ser-1165. Positions 1171 and 1175 each coordinate Zn(2+). Residues 1217-1369 (PTVPQSYQVA…SNIEEVALSA (153 aa)) form the Helicase ATP-binding domain. 1230 to 1237 (APTGSGKS) contributes to the ATP binding site. Residues Ser-1237 and Glu-1317 each coordinate Mg(2+). Positions 1316–1319 (DECH) match the DECH box motif. Residues 1486–1497 (QRRGRTGRGKHG) form an RNA-binding region. A helical transmembrane segment spans residues 1658 to 1678 (STWVLVGGVLAALAAYCLSTG). The segment at 1679 to 1690 (SVVIVGRIILGG) is NS3-binding. Over 1679 to 1805 (SVVIVGRIIL…AVTSPLTTQQ (127 aa)) the chain is Cytoplasmic. A helical membrane pass occupies residues 1806–1824 (TLFFNILGGWVAAQLASPA). Over 1825–1828 (AATA) the chain is Lumenal. The helical transmembrane segment at 1829–1849 (FVGAGITGAVVGSVGLGKVLV) threads the bilayer. Position 1850 (Asp-1850) is a topological domain, cytoplasmic. Residues 1851 to 1871 (IIAGYGAGVAGALVAFKIMSG) traverse the membrane as a helical segment. Residues 1872-1881 (ETPTTEDLVN) are Lumenal-facing. A helical membrane pass occupies residues 1882-1902 (LLPAILSPGALVVGVVCAAIL). The Cytoplasmic segment spans residues 1903-1972 (RRHVGPGEGA…WISSDCIAPC (70 aa)). 2 S-palmitoyl cysteine; by host lipidation sites follow: Cys-1968 and Cys-1972. Residues 1973–2002 (ASSWLKDVWDWICEVLSDFKNWLKAKLVPQ) lie within the membrane without spanning it. Residues 2003-2990 (LPGIPFVSCQ…YHSVSHARPR (988 aa)) are Cytoplasmic-facing. Cys-2011, Cys-2029, Cys-2031, and Cys-2052 together coordinate Zn(2+). The segment at 2120 to 2208 (EFFTEVDGVR…ASSSASQLSA (89 aa)) is FKBP8-binding. The segment at 2120 to 2332 (EFFTEVDGVR…PVPPPRRKRT (213 aa)) is transcriptional activation. The tract at residues 2135 to 2139 (PPCKP) is interaction with non-structural protein 4A. Residues 2187-2219 (ARRLKRGSPPSLASSSASQLSAPSLKATCTTHH) form a disordered region. The interaction with host SKP2 stretch occupies residues 2189-2441 (RLKRGSPPSL…TPCASEEAKL (253 aa)). A Phosphoserine; by host; in p56 modification is found at Ser-2194. Positions 2194-2211 (SPPSLASSSASQLSAPSL) are enriched in low complexity. Phosphoserine; by host; in p58 is present on residues Ser-2197, Ser-2201, Ser-2204, Ser-2207, and Ser-2210. The segment at 2210–2249 (SLKATCTTHHDSPDADLIEANLLWRQEMGGNITRVESENK) is ISDR. The tract at residues 2210 to 2275 (SLKATCTTHH…REISIPAEIL (66 aa)) is interaction with EIF2AK2/PKR. Positions 2249-2306 (KIVVLDSFDPLVAEEDDREISIPAEILRKFKQFPPAMPIWARPDYNPPLVEPWKRPDY) are NS4B-binding. Residues 2322–2325 (TPVP) carry the SH3-binding motif. The Nuclear localization signal motif lies at 2326 to 2334 (PPRRKRTVV). Residue Lys-2350 forms a Glycyl lysine isopeptide (Lys-Gly) (interchain with G-Cter in ubiquitin) linkage. Residues 2352–2369 (FGSSTTSGVTSGEATESS) are compositionally biased toward low complexity. The tract at residues 2352-2409 (FGSSTTSGVTSGEATESSPAPSCGGELDSEAESYSSMPPLEGEPGDPDLSDGSWSTVS) is disordered. The segment at 2354-2377 (SSTTSGVTSGEATESSPAPSCGGE) is V3. Ser-2449 and Ser-2462 each carry phosphoserine; by host. One can recognise a RdRp catalytic domain in the interval 2634-2752 (PMGFSYDTRC…ICESAGVQED (119 aa)). Residues Asp-2640, Asp-2738, and Asp-2739 each coordinate Mg(2+). The helical transmembrane segment at 2991–3011 (LFLWCLLLLSVGVGIYLLPNR) threads the bilayer.

The protein belongs to the hepacivirus polyprotein family. In terms of assembly, homooligomer. Interacts with E1 (via C-terminus). Interacts with the non-structural protein 5A. Interacts (via N-terminus) with host STAT1 (via SH2 domain); this interaction results in decreased STAT1 phosphorylation and ubiquitin-mediated proteasome-dependent STAT1 degradation, leading to decreased IFN-stimulated gene transcription. Interacts with host STAT3; this interaction constitutively activates STAT3. Interacts with host LTBR receptor. Interacts with host TNFRSF1A receptor and possibly induces apoptosis. Interacts with host HNRPK. Interacts with host YWHAE. Interacts with host UBE3A/E6AP. Interacts with host DDX3X. Interacts with host APOA2. Interacts with host RXRA protein. Interacts with host SP110 isoform 3/Sp110b; this interaction sequesters the transcriptional corepressor SP110 away from the nucleus. Interacts with host CREB3 nuclear transcription protein; this interaction triggers cell transformation. Interacts with host ACY3. Interacts with host C1QR1. Interacts with host RBM24; this interaction, which enhances the interaction of the mature core protein with 5'-UTR, may inhibit viral translation and favor replication. Interacts with host EIF2AK2/PKR; this interaction induces the autophosphorylation of EIF2AK2. Part of the viral assembly initiation complex composed of NS2, E1, E2, NS3, NS4A, NS5A and the mature core protein. As to quaternary structure, forms a heterodimer with envelope glycoprotein E2. Interacts with mature core protein. Interacts with protease NS2. The heterodimer E1/E2 interacts with host CLDN1; this interaction plays a role in viral entry into host cell. Interacts with host SPSB2 (via C-terminus). Part of the viral assembly initiation complex composed of NS2, E1, E2, NS3, NS4A, NS5A and the mature core protein. Interacts with host NEURL3; this interaction prevents E1 binding to glycoprotein E2. Forms a heterodimer with envelope glycoprotein E1. Interacts with host CD81 and SCARB1 receptors; these interactions play a role in viral entry into host cell. Interacts with host EIF2AK2/PKR; this interaction inhibits EIF2AK2 and probably allows the virus to evade the innate immune response. Interacts with host CD209/DC-SIGN and CLEC4M/DC-SIGNR. Interact with host SPCS1; this interaction is essential for viral particle assembly. Interacts with protease NS2. The heterodimer E1/E2 interacts with host CLDN1; this interaction plays a role in viral entry into host cell. Part of the viral assembly initiation complex composed of NS2, E1, E2, NS3, NS4A, NS5A and the mature core protein. Interacts with host SLC3A2/4F2hc; the interaction may facilitate viral entry into host cell. Interacts with human PLSCR1. In terms of assembly, homohexamer. Homoheptamer. Interacts with protease NS2. As to quaternary structure, homodimer. Interacts with host SPCS1; this interaction is essential for viral particle assembly. Interacts with envelope glycoprotein E1. Interacts with envelope glycoprotein E2. Interacts with viroporin p7. Interacts with serine protease/helicase NS3. Part of the replication complex composed of NS2, NS3, NS4A, NS4B, NS5A and the RNA-directed RNA polymerase embedded in an ER-derived membranous web. Part of the viral assembly initiation complex composed of NS2, E1, E2, NS3, NS4A, NS5A and the mature core protein. Interacts with protease NS2. Interacts with non-structural protein 4A; this interaction stabilizes the folding of NS3 serine protease. NS3-NS4A interaction is essential for NS3 activation and allows membrane anchorage of the latter. NS3/NS4A complex also prevents phosphorylation of host IRF3, thus preventing the establishment of dsRNA induced antiviral state. Interacts with host MAVS; this interaction leads to the cleavage and inhibition of host MAVS. Interacts with host TICAM1; this interaction leads to the cleavage and inhibition of host TICAM1. Interacts with host TANK-binding kinase/TBK1; this interaction results in the inhibition of the association between TBK1 and IRF3, which leads to the inhibition of IRF3 activation. Interacts with host RBM24. Part of the replication complex composed of NS2, NS3, NS4A, NS4B, NS5A and the RNA-directed RNA polymerase embedded in an ER-derived membranous web. Part of the viral assembly initiation complex composed of NS2, E1, E2, NS3, NS4A, NS5A and the mature core protein. In terms of assembly, interacts with NS3 serine protease; this interaction stabilizes the folding of NS3 serine protease. NS3-NS4A interaction is essential for NS3 activation and allows membrane anchorage of the latter. Interacts with non-structural protein 5A (via N-terminus). Part of the replication complex composed of NS2, NS3, NS4A, NS4B, NS5A and the RNA-directed RNA polymerase embedded in an ER-derived membranous web. Part of the viral assembly initiation complex composed of NS2, E1, E2, NS3, NS4A, NS5A and the mature core protein. As to quaternary structure, homomultimer. Interacts with non-structural protein NS5A. Interacts with host PLA2G4C; this interaction likely initiates the recruitment of replication complexes to lipid droplets. Interacts with host STING; this interaction disrupts the interaction between STING and TBK1 thereby suppressing the interferon signaling. Part of the replication complex composed of NS2, NS3, NS4A, NS4B, NS5A and the RNA-directed RNA polymerase embedded in an ER-derived membranous web. Monomer. Homodimer; dimerization is required for RNA-binding. Interacts with the mature core protein. Interacts (via N-terminus) with non-structural protein 4A. Interacts with non-structural protein 4B. Interacts (via region D2) with RNA-directed RNA polymerase. Part of the viral assembly initiation complex composed of NS2, E1, E2, NS3, NS4A, NS5A and the mature core protein. Part of the replication complex composed of NS2, NS3, NS4A, NS4B, NS5A and the RNA-directed RNA polymerase embedded in an ER-derived membranous web. Interacts with host GRB2. Interacts with host BIN1. Interacts with host PIK3R1. Interacts with host SRCAP. Interacts with host FKBP8. Interacts (via C-terminus) with host VAPB (via MSP domain). Interacts with host EIF2AK2/PKR; this interaction leads to disruption of EIF2AK2 dimerization by NS5A and probably allows the virus to evade the innate immune response. Interacts (via N-terminus) with host PACSIN2 (via N-terminus); this interaction attenuates protein kinase C alpha-mediated phosphorylation of PACSIN2 by disrupting the interaction between PACSIN2 and PRKCA. Interacts (via N-terminus) with host SRC kinase (via SH2 domain). Interacts with most Src-family kinases. Interacts with host IFI27 and SKP2; promotes the ubiquitin-mediated proteasomal degradation of NS5A. Interacts with host GPS2. Interacts with host TNFRSF21; this interaction allows the modulation by the virus of JNK, p38 MAPK, STAT3, and Akt signaling pathways in a DR6-dependent manner. Interacts (via N-terminus) with host CIDEB (via N-terminus); this interaction seems to regulate the association of HCV particles with APOE. Interacts with host CHKA/Choline Kinase-alpha; CHKA bridges host PI4KA and NS5A and potentiates NS5A-stimulated PI4KA activity, which then facilitates the targeting of the ternary complex to the ER for viral replication. Interacts with host SPSB2 (via C-terminus); this interaction targets NS5A for ubiquitination and degradation. Interacts with host RAB18; this interaction may promote the association of NS5A and other replicase components with lipid droplets. Interacts (via region D2) with host PPIA/CYPA; the interaction stimulates RNA-binding ability of NS5A and is dependent on the peptidyl-prolyl cis-trans isomerase activity of PPIA/CYPA. Interacts with host TRIM14; this interaction induces the degradation of NS5A. In terms of assembly, homooligomer. Interacts with non-structural protein 5A. Interacts with host VAPB. Interacts with host PRK2/PKN2. Interacts with host HNRNPA1 and SEPT6; these interactions facilitate viral replication. Part of the replication complex composed of NS2, NS3, NS4A, NS4B, NS5A and the RNA-directed RNA polymerase. Zn(2+) serves as cofactor. Requires Mg(2+) as cofactor. Post-translationally, specific enzymatic cleavages in vivo yield mature proteins. The structural proteins, core, E1, E2 and p7 are produced by proteolytic processing by host signal peptidases. The core protein precursor is synthesized as a 23 kDa, which is retained in the ER membrane through the hydrophobic signal peptide. Cleavage by the signal peptidase releases the 21 kDa mature core protein. The cleavage of the core protein precursor occurs between aminoacids 176 and 188 but the exact cleavage site is not known. Some degraded forms of the core protein appear as well during the course of infection. The other proteins (p7, NS2, NS3, NS4A, NS4B, NS5A and NS5B) are cleaved by the viral proteases. Autoprocessing between NS2 and NS3 is mediated by the NS2 cysteine protease catalytic domain and regulated by the NS3 N-terminal domain. In terms of processing, phosphorylated by host PKC and PKA. Ubiquitinated; mediated by UBE3A and leading to core protein subsequent proteasomal degradation. Post-translationally, highly N-glycosylated. In terms of processing, palmitoylation is required for NS2/3 autoprocessing and E2 recruitment to membranes. Palmitoylated. This modification may play a role in its polymerization or in protein-protein interactions. Post-translationally, phosphorylated on serines in a basal form termed p56. p58 is a hyperphosphorylated form of p56. p56 and p58 coexist in the cell in roughly equivalent amounts. Hyperphosphorylation is dependent on the presence of NS4A. Host CSNK1A1/CKI-alpha or RPS6KB1 kinases may be responsible for NS5A phosphorylation. In terms of processing, tyrosine phosphorylation is essential for the interaction with host SRC. The N-terminus is phosphorylated by host PRK2/PKN2.

Its subcellular location is the host endoplasmic reticulum membrane. It localises to the host mitochondrion membrane. It is found in the virion. The protein localises to the host cytoplasm. The protein resides in the host nucleus. Its subcellular location is the host lipid droplet. It localises to the virion membrane. It is found in the host mitochondrion. The protein localises to the host cell membrane. The protein resides in the host perinuclear region. It carries out the reaction Hydrolysis of four peptide bonds in the viral precursor polyprotein, commonly with Asp or Glu in the P6 position, Cys or Thr in P1 and Ser or Ala in P1'.. The enzyme catalyses a ribonucleoside 5'-triphosphate + H2O = a ribonucleoside 5'-diphosphate + phosphate + H(+). The catalysed reaction is ATP + H2O = ADP + phosphate + H(+). It catalyses the reaction RNA(n) + a ribonucleoside 5'-triphosphate = RNA(n+1) + diphosphate. With respect to regulation, inhibited by the antiviral drug hexamethylene amiloride. Inhibition by amantadine appears to be genotype-dependent. Also inhibited by long-alkyl-chain iminosugar derivatives. Its activity is regulated as follows. Activity is up-regulated by PRK2/PKN2-mediated phosphorylation. In terms of biological role, packages viral RNA to form a viral nucleocapsid, and promotes virion budding. Participates in the viral particle production as a result of its interaction with the non-structural protein 5A. Binds RNA and may function as a RNA chaperone to induce the RNA structural rearrangements taking place during virus replication. Modulates viral translation initiation by interacting with viral IRES and 40S ribosomal subunit. Affects various cell signaling pathways, host immunity and lipid metabolism. Prevents the establishment of cellular antiviral state by blocking the interferon-alpha/beta (IFN-alpha/beta) and IFN-gamma signaling pathways and by blocking the formation of phosphorylated STAT1 and promoting ubiquitin-mediated proteasome-dependent degradation of STAT1. Activates STAT3 leading to cellular transformation. Regulates the activity of cellular genes, including c-myc and c-fos. May repress the promoter of p53, and sequester CREB3 and SP110 isoform 3/Sp110b in the cytoplasm. Represses cell cycle negative regulating factor CDKN1A, thereby interrupting an important check point of normal cell cycle regulation. Targets transcription factors involved in the regulation of inflammatory responses and in the immune response: suppresses TNF-induced NF-kappa-B activation, and activates AP-1. Binds to dendritic cells (DCs) via C1QR1, resulting in down-regulation of T-lymphocytes proliferation. Alters lipid metabolism by interacting with hepatocellular proteins involved in lipid accumulation and storage. Induces up-regulation of FAS promoter activity, and thereby contributes to the increased triglyceride accumulation in hepatocytes (steatosis). Its function is as follows. Forms a heterodimer with envelope glycoprotein E2, which mediates virus attachment to the host cell, virion internalization through clathrin-dependent endocytosis and fusion with host membrane. Fusion with the host cell is most likely mediated by both E1 and E2, through conformational rearrangements of the heterodimer required for fusion rather than a classical class II fusion mechanism. E1/E2 heterodimer binds host apolipoproteins such as APOB and ApoE thereby forming a lipo-viro-particle (LVP). APOE associated to the LVP allows the initial virus attachment to cell surface receptors such as the heparan sulfate proteoglycans (HSPGs), syndecan-1 (SDC1), syndecan-1 (SDC2), the low-density lipoprotein receptor (LDLR) and scavenger receptor class B type I (SCARB1). The cholesterol transfer activity of SCARB1 allows E2 exposure and binding of E2 to SCARB1 and the tetraspanin CD81. E1/E2 heterodimer binding on CD81 activates the epithelial growth factor receptor (EGFR) signaling pathway. Diffusion of the complex E1-E2-EGFR-SCARB1-CD81 to the cell lateral membrane allows further interaction with Claudin 1 (CLDN1) and occludin (OCLN) to finally trigger HCV entry. Forms a heterodimer with envelope glycoprotein E1, which mediates virus attachment to the host cell, virion internalization through clathrin-dependent endocytosis and fusion with host membrane. Fusion with the host cell is most likely mediated by both E1 and E2, through conformational rearrangements of the heterodimer required for fusion rather than a classical class II fusion mechanism. The interaction between envelope glycoprotein E2 and host apolipoprotein E/APOE allows the proper assembly, maturation and infectivity of the viral particles. This interaction is probably promoted via the up-regulation of cellular autophagy by the virus. E1/E2 heterodimer binds host apolipoproteins such as APOB and APOE thereby forming a lipo-viro-particle (LVP). APOE associated to the LVP allows the initial virus attachment to cell surface receptors such as the heparan sulfate proteoglycans (HSPGs), syndecan-1 (SDC1), syndecan-1 (SDC2), the low-density lipoprotein receptor (LDLR) and scavenger receptor class B type I (SCARB1). The cholesterol transfer activity of SCARB1 allows E2 exposure and binding of E2 to SCARB1 and the tetraspanin CD81. E1/E2 heterodimer binding on CD81 activates the epithelial growth factor receptor (EGFR) signaling pathway. Diffusion of the complex E1-E2-EGFR-SCARB1-CD81 to the cell lateral membrane allows further interaction with Claudin 1 (CLDN1) and occludin (OCLN) to finally trigger HCV entry. Inhibits host EIF2AK2/PKR activation, preventing the establishment of an antiviral state. Viral ligand for CD209/DC-SIGN and CLEC4M/DC-SIGNR, which are respectively found on dendritic cells (DCs), and on liver sinusoidal endothelial cells and macrophage-like cells of lymph node sinuses. These interactions allow the capture of circulating HCV particles by these cells and subsequent facilitated transmission to permissive cells such as hepatocytes and lymphocyte subpopulations. The interaction between E2 and host amino acid transporter complex formed by SLC3A2 and SLC7A5/LAT1 may facilitate viral entry into host cell. Functionally, ion channel protein that acts as a viroporin and plays an essential role in the assembly, envelopment and secretion of viral particles. Regulates the host cell secretory pathway, which induces the intracellular retention of viral glycoproteins and favors assembly of viral particles. Creates a pore in acidic organelles and releases Ca(2+) and H(+) in the cytoplasm of infected cells, leading to a productive viral infection. High levels of cytoplasmic Ca(2+) may trigger membrane trafficking and transport of viral ER-associated proteins to viroplasms, sites of viral genome replication. This ionic imbalance induces the assembly of the inflammasome complex, which triggers the maturation of pro-IL-1beta into IL-1beta through the action of caspase-1. Targets also host mitochondria and induces mitochondrial depolarization. In addition of its role as a viroporin, acts as a lipid raft adhesion factor. In terms of biological role, cysteine protease required for the proteolytic auto-cleavage between the non-structural proteins NS2 and NS3. The N-terminus of NS3 is required for the function of NS2 protease (active region NS2-3). Promotes the initiation of viral particle assembly by mediating the interaction between structural and non-structural proteins. Its function is as follows. Displays three enzymatic activities: serine protease with a chymotrypsin-like fold, NTPase and RNA helicase. NS3 serine protease, in association with NS4A, is responsible for the cleavages of NS3-NS4A, NS4A-NS4B, NS4B-NS5A and NS5A-NS5B. The NS3/NS4A complex prevents phosphorylation of host IRF3, thus preventing the establishment of dsRNA induced antiviral state. The NS3/NS4A complex induces host amino acid transporter component SLC3A2, thus contributing to HCV propagation. NS3 RNA helicase binds to RNA and unwinds both dsDNA and dsRNA in the 3' to 5' direction, and likely resolves RNA complicated stable secondary structures in the template strand. Binds a single ATP and catalyzes the unzipping of a single base pair of dsRNA. Inhibits host antiviral proteins TBK1 and IRF3 thereby preventing the establishment of an antiviral state. Cleaves host MAVS/CARDIF thereby preventing the establishment of an antiviral state. Cleaves host TICAM1/TRIF, thereby disrupting TLR3 signaling and preventing the establishment of an antiviral state. Induces a specific membrane alteration that serves as a scaffold for the virus replication complex. This membrane alteration gives rise to the so-called ER-derived membranous web that contains the replication complex. NS4B self-interaction contributes to its function in membranous web formation. Promotes host TRIF protein degradation in a CASP8-dependent manner thereby inhibiting host TLR3-mediated interferon signaling. Disrupts the interaction between STING and TBK1 contributing to the inhibition of interferon signaling. Functionally, phosphorylated protein that is indispensable for viral replication and assembly. Both hypo- and hyperphosphorylated states are required for the viral life cycle. The hyperphosphorylated form of NS5A is an inhibitor of viral replication. Involved in RNA-binding and especially in binding to the viral genome. Zinc is essential for RNA-binding. Participates in the viral particle production as a result of its interaction with the mature viral core protein. Its interaction with host VAPB may target the viral replication complex to vesicles. Down-regulates viral IRES translation initiation. Mediates interferon resistance, presumably by interacting with and inhibiting host EIF2AK2/PKR. Prevents BIN1-induced apoptosis. Acts as a transcriptional activator of some host genes important for viral replication when localized in the nucleus. Via the interaction with host PACSIN2, modulates lipid droplet formation in order to promote virion assembly. Modulates TNFRSF21/DR6 signaling pathway for viral propagation. In terms of biological role, RNA-dependent RNA polymerase that performs primer-template recognition and RNA synthesis during viral replication. Initiates RNA transcription/replication at a flavin adenine dinucleotide (FAD), resulting in a 5'- FAD cap on viral RNAs. In this way, recognition of viral 5' RNA by host pattern recognition receptors can be bypassed, thereby evading activation of antiviral pathways. The polypeptide is Genome polyprotein (Hepatitis C virus genotype 1c (isolate India) (HCV)).